The sequence spans 257 residues: Adenosylcobinamide-GDP ribazoletransferase (257 aa).

The next 6 membrane-spanning stretches (helical) occupy residues 4 to 24, 40 to 60, 64 to 84, 116 to 136, 140 to 160, and 193 to 213; these read AVRGLLLALAFLTRLPVWWLG, VVGLILGILLLALYALLQWFF, FVVQAALLVAAWALVTGLLHL, AAVAVITLALVVKVAALAALL, AALAALLIAPVLGRAAAALLI, and LFVTALAGWAGLAAVLGVVAV.

The protein belongs to the CobS family. The cofactor is Mg(2+).

It is found in the cell inner membrane. The enzyme catalyses alpha-ribazole + adenosylcob(III)inamide-GDP = adenosylcob(III)alamin + GMP + H(+). It carries out the reaction alpha-ribazole 5'-phosphate + adenosylcob(III)inamide-GDP = adenosylcob(III)alamin 5'-phosphate + GMP + H(+). It functions in the pathway cofactor biosynthesis; adenosylcobalamin biosynthesis; adenosylcobalamin from cob(II)yrinate a,c-diamide: step 7/7. Functionally, joins adenosylcobinamide-GDP and alpha-ribazole to generate adenosylcobalamin (Ado-cobalamin). Also synthesizes adenosylcobalamin 5'-phosphate from adenosylcobinamide-GDP and alpha-ribazole 5'-phosphate. This is Adenosylcobinamide-GDP ribazoletransferase from Alkalilimnicola ehrlichii (strain ATCC BAA-1101 / DSM 17681 / MLHE-1).